The following is a 127-amino-acid chain: Large ribosomal subunit protein eL8 (127 aa).

This sequence belongs to the eukaryotic ribosomal protein eL8 family. As to quaternary structure, part of the 50S ribosomal subunit. Probably part of the RNase P complex.

The protein localises to the cytoplasm. Functionally, multifunctional RNA-binding protein that recognizes the K-turn motif in ribosomal RNA, the RNA component of RNase P, box H/ACA, box C/D and box C'/D' sRNAs. The protein is Large ribosomal subunit protein eL8 of Picrophilus torridus (strain ATCC 700027 / DSM 9790 / JCM 10055 / NBRC 100828 / KAW 2/3).